The chain runs to 1344 residues: Centrosomal P4.1-associated protein (1344 aa).

Disordered stretches follow at residues 67 to 123 (SSEE…NNDL) and 187 to 225 (PGTLLPDDQSQKHRSPGDLTLPPHSYSNPTQENSCASNV). The span at 211–225 (SYSNPTQENSCASNV) shows a compositional bias: polar residues. S248 carries the post-translational modification Phosphoserine. The disordered stretch occupies residues 257-300 (QEAHVKRNDLKEESPAHPSGEGALPRWEKKMGRSQEGKDVNLQK). Basic and acidic residues-rich tracts occupy residues 259–271 (AHVKRNDLKEESP) and 282–297 (RWEKKMGRSQEGKDVN). S304 is subject to Phosphoserine. The interval 307–382 (VVNIDERPIK…FTNAKSKFQK (76 aa)) is alpha/beta-tubulin binding. Disordered stretches follow at residues 347–407 (QEAE…DRQH) and 425–470 (TVKK…KKRD). Residues 388–398 (LASTQSPSEDQ) are compositionally biased toward polar residues. The residue at position 528 (S528) is a Phosphoserine. A phosphoserine; by PLK2 mark is found at S577 and S583. Disordered stretches follow at residues 600–626 (RLSSTPVKAVQQREAQQADPRGQSNCS) and 672–735 (TSEI…DTGA). A compositionally biased stretch (basic and acidic residues) spans 709 to 720 (VGDRVFSNREDS). Phosphoserine is present on S748. The segment at 887 to 1344 (QPPEFMVCFI…DGNVLMDTEM (458 aa)) is interaction with STIL. Residues 1105–1133 (QGNLSRRIKSAPPRDLGSSDKGQAALPRE) are disordered.

The protein belongs to the TCP10 family. As to quaternary structure, forms homodimers. Associates with microtubules plus ends; binds to beta-tubulin subunits exposed on microtubule outer surface at its distal tip; also associates with microtubule lattice. Associated with the gamma-tubulin complex. Interacts with the head domain of EPB41. Interacts with LYST. Interacts with CEP152 (via C-terminus). Interacts with STIL. Forms a complex with STIL and SASS6. In terms of processing, phosphorylation at Ser-577 and Ser-583 by PLK2 is required for procentriole formation and centriole elongation. Phosphorylation by PLK2 oscillates during the cell cycle: it increases at G1/S transition and decreases during the exit from mitosis. Phosphorylation at Ser-583 is also mediated by PLK4 but is not a critical step in PLK4 function in procentriole assembly.

It localises to the cytoplasm. Its subcellular location is the cytoskeleton. It is found in the microtubule organizing center. The protein localises to the centrosome. The protein resides in the centriole. Plays an important role in cell division and centrosome function by participating in centriole duplication. Inhibits microtubule nucleation from the centrosome. Involved in the regulation of slow processive growth of centriolar microtubules. Acts as microtubule plus-end tracking protein that stabilizes centriolar microtubules and inhibits microtubule polymerization and extension from the distal ends of centrioles. Required for centriole elongation and for STIL-mediated centriole amplification. Required for the recruitment of CEP295 to the proximal end of new-born centrioles at the centriolar microtubule wall during early S phase in a PLK4-dependent manner. May be involved in the control of centriolar-microtubule growth by acting as a regulator of tubulin release. The chain is Centrosomal P4.1-associated protein (Cpap) from Mus musculus (Mouse).